A 356-amino-acid polypeptide reads, in one-letter code: Protein-glutamate methylesterase/protein-glutamine glutaminase 2 (356 aa).

The Response regulatory domain occupies 4–121 (RALVVDDSAL…SQSMPEMAEE (118 aa)). 4-aspartylphosphate is present on Asp55. A CheB-type methylesterase domain is found at 161–356 (KAAPRNILAI…MAEEIIRIIG (196 aa)). Catalysis depends on residues Ser173, His200, and Asp300.

It belongs to the CheB family. In terms of processing, phosphorylated by CheA. Phosphorylation of the N-terminal regulatory domain activates the methylesterase activity.

The protein localises to the cytoplasm. It catalyses the reaction [protein]-L-glutamate 5-O-methyl ester + H2O = L-glutamyl-[protein] + methanol + H(+). The enzyme catalyses L-glutaminyl-[protein] + H2O = L-glutamyl-[protein] + NH4(+). Its function is as follows. Involved in chemotaxis. Part of a chemotaxis signal transduction system that modulates chemotaxis in response to various stimuli. Catalyzes the demethylation of specific methylglutamate residues introduced into the chemoreceptors (methyl-accepting chemotaxis proteins or MCP) by CheR. Also mediates the irreversible deamidation of specific glutamine residues to glutamic acid. The chain is Protein-glutamate methylesterase/protein-glutamine glutaminase 2 from Methanosarcina acetivorans (strain ATCC 35395 / DSM 2834 / JCM 12185 / C2A).